Here is a 149-residue protein sequence, read N- to C-terminus: 3-dehydroquinate dehydratase (149 aa).

The active-site Proton acceptor is the Tyr-26. Residues Asn-77, His-83, and Asp-90 each contribute to the substrate site. His-103 functions as the Proton donor in the catalytic mechanism. Residues 104-105 and Arg-114 contribute to the substrate site; that span reads LS.

The protein belongs to the type-II 3-dehydroquinase family. Homododecamer.

The enzyme catalyses 3-dehydroquinate = 3-dehydroshikimate + H2O. It functions in the pathway metabolic intermediate biosynthesis; chorismate biosynthesis; chorismate from D-erythrose 4-phosphate and phosphoenolpyruvate: step 3/7. Functionally, catalyzes a trans-dehydration via an enolate intermediate. This is 3-dehydroquinate dehydratase from Psychromonas ingrahamii (strain DSM 17664 / CCUG 51855 / 37).